Consider the following 748-residue polypeptide: Probable transcriptional regulator SLK1 (748 aa).

Disordered stretches follow at residues 67-93 (QHLP…RENN) and 138-163 (QQRL…QQQQ). The span at 71–81 (QQQQQQLLQQQ) shows a compositional bias: low complexity. The tract at residues 204–451 (PAENCITYWR…EQKIGPIEGL (248 aa)) is dimerization. The short motif at 213–227 (RKFVAEYFSPRAKQR) is the Nuclear localization signal element. Positions 572 to 587 (NAMNNPNSNTGKQEGF) are enriched in polar residues. Disordered stretches follow at residues 572-653 (NAMN…GNTP) and 667-712 (ENGG…NNSF). Positions 588–606 (SSQNPTPNSNQSPSSSSQQ) are enriched in low complexity. Residues 615–653 (FPNSPQMQQQQRTMNGPTNILPQNHPHQLQSPHSHGNTP) are compositionally biased toward polar residues. Positions 667–686 (ENGGSVQQQQAFSGQSGSNS) are enriched in low complexity. The span at 687 to 699 (NAERNTTASTSNI) shows a compositional bias: polar residues.

Belongs to the adn1/SEU family. In terms of assembly, forms corepressor complexes with LUH; LUH is the transcription repressor subunit and SLK1 the specific DNA-binding adapters. As to expression, expressed in young flower meristems, ovules and the carpel margin meristem.

It localises to the nucleus. Probable transcription regulator that functions in the development of the carpel margin meristem similarly to SEUSS (SEU). In association with SEU, supports organ development from meristematic regions by facilitating auxin response and thus organ initiation, and by sustaining meristematic potential through the maintenance of PHABULOSA expression. DNA-binding adapter subunit of the SEU-SLK1 transcriptional corepressor of abiotic stress (e.g. salt and osmotic stress) response genes. The chain is Probable transcriptional regulator SLK1 (SLK1) from Arabidopsis thaliana (Mouse-ear cress).